The primary structure comprises 362 residues: MKIKKIKLLKALALTGAFGIVATVPVIVSSCSSTSENNGNGNGNGGTDGNTQQTEVTPAIKSEVSLTGALSKIYDTKTGTDRETTSQLIVKDIKANPENYFTNGEALKDVIASATVTVDGGFTESTFTGEAYSVWSAKADVKKGTYSQASKQLDIKSINDLQTVLGDSAAIKGICDLIPNLKLNNGTDYKVTNNGLSLSEDLLHINVTAKDGQTDVSMDLAIPVSDLNLKIDGLKISVSGTGIKTSELTTNYKFNIGIDNTVKTLTPAAVTLAEADRTNAEKVLEKLGYATVSGSTYTLDQDKLADALGLYNCKFEAVKSEKDSTNNNKYTVTLKATPNDGYFWEDGTNGAKEDISFVATFS.

The first 30 residues, M1–S30, serve as a signal peptide directing secretion. C31 carries N-palmitoyl cysteine lipidation. C31 is lipidated: S-diacylglycerol cysteine. The interval S33–Q53 is disordered.

This sequence belongs to the p35 lipoprotein family. In terms of processing, the N-terminus is blocked.

Its subcellular location is the cell membrane. Functionally, major M.penetrans antigen. This chain is Lipoprotein p35, found in Malacoplasma penetrans (strain HF-2) (Mycoplasma penetrans).